Here is a 354-residue protein sequence, read N- to C-terminus: L-lactate dehydrogenase (354 aa).

NAD(+)-binding positions include 73–78 (DAVPDK) and Arg-120. Substrate contacts are provided by Arg-127, Asn-159, and Arg-190. Asn-159 contributes to the NAD(+) binding site. The active-site Proton acceptor is the His-214. Thr-269 contributes to the substrate binding site. The interval 302 to 332 (HGIPDGTTSSSACPPRRPRRRPGRREMELTE) is disordered.

Belongs to the LDH/MDH superfamily. LDH family. Homotetramer.

The enzyme catalyses (S)-lactate + NAD(+) = pyruvate + NADH + H(+). It functions in the pathway fermentation; pyruvate fermentation to lactate; (S)-lactate from pyruvate: step 1/1. The chain is L-lactate dehydrogenase from Zea mays (Maize).